We begin with the raw amino-acid sequence, 775 residues long: Glutamine--tRNA ligase (775 aa).

At alanine 2 the chain carries N-acetylalanine. Serine 70 carries the phosphoserine modification. The short motif at 270-280 (PEPNGILHIGH) is the 'HIGH' region element. Residues 271-273 (EPN) and 277-283 (HIGHAKA) each bind ATP. Aspartate 303 is a binding site for L-glutamine. Lysine 309 carries the N6-acetyllysine modification. Tyrosine 438 contacts L-glutamine. Residues threonine 457, 486-487 (RL), and 494-496 (VSK) contribute to the ATP site. The short motif at 493–497 (VVSKR) is the 'KMSKS' region element. Serine 495 carries the phosphoserine modification.

Belongs to the class-I aminoacyl-tRNA synthetase family. As to quaternary structure, monomer. Part of a multisubunit complex that groups tRNA ligases for Arg (RARS1), Asp (DARS1), Gln (QARS1), Ile (IARS1), Leu (LARS1), Lys (KARS1), Met (MARS1) the bifunctional ligase for Glu and Pro (EPRS1) and the auxiliary subunits AIMP1/p43, AIMP2/p38 and EEF1E1/p18. Interacts with RARS1. Part of a complex composed of RARS1, QARS1 and AIMP1.

Its subcellular location is the cytoplasm. It is found in the cytosol. It catalyses the reaction tRNA(Gln) + L-glutamine + ATP = L-glutaminyl-tRNA(Gln) + AMP + diphosphate. Functionally, glutamine--tRNA ligase. Plays a critical role in brain development. The polypeptide is Glutamine--tRNA ligase (QARS1) (Bos taurus (Bovine)).